The primary structure comprises 523 residues: 2-isopropylmalate synthase (523 aa).

One can recognise a Pyruvate carboxyltransferase domain in the interval 5-267; it reads VIIFDTTLRD…HTAINHQEIW (263 aa). Positions 14, 202, 204, and 238 each coordinate Mn(2+). The tract at residues 392-523 is regulatory domain; it reads RLDYFSVQSG…QHNENNKETV (132 aa).

This sequence belongs to the alpha-IPM synthase/homocitrate synthase family. LeuA type 1 subfamily. In terms of assembly, homodimer. It depends on Mn(2+) as a cofactor.

It localises to the cytoplasm. It catalyses the reaction 3-methyl-2-oxobutanoate + acetyl-CoA + H2O = (2S)-2-isopropylmalate + CoA + H(+). It functions in the pathway amino-acid biosynthesis; L-leucine biosynthesis; L-leucine from 3-methyl-2-oxobutanoate: step 1/4. Functionally, catalyzes the condensation of the acetyl group of acetyl-CoA with 3-methyl-2-oxobutanoate (2-ketoisovalerate) to form 3-carboxy-3-hydroxy-4-methylpentanoate (2-isopropylmalate). In Shigella flexneri, this protein is 2-isopropylmalate synthase.